We begin with the raw amino-acid sequence, 135 residues long: MSQEFVGRWKLIHSENFEEYMKEVGVGLITRKAAANLKPTLEIKVEGDLWYSNQYSTFKNTTLSFKLGQEFDETTPDGRTVKSVVNFENGKFIHIQKKIKDSDKESIITRWLEGDKLITTLESGSVVSRREYVRE.

A fatty acid-binding positions include R110 and 130–132; that span reads REY.

This sequence belongs to the calycin superfamily. Fatty-acid binding protein (FABP) family.

The chain is Fatty acid-binding protein homolog 6 (lbp-6) from Caenorhabditis elegans.